The chain runs to 95 residues: Acylphosphatase (95 aa).

In terms of domain architecture, Acylphosphatase-like spans 7 to 95 (RLTAWVLGTV…PKGEVGFRTR (89 aa)). Active-site residues include arginine 22 and asparagine 40.

It belongs to the acylphosphatase family.

It carries out the reaction an acyl phosphate + H2O = a carboxylate + phosphate + H(+). This chain is Acylphosphatase (acyP), found in Corynebacterium diphtheriae (strain ATCC 700971 / NCTC 13129 / Biotype gravis).